Reading from the N-terminus, the 776-residue chain is Zinc finger CCCH-type antiviral protein 1 (776 aa).

A2 is modified (N-acetylalanine). The N-terminal domain stretch occupies residues 2 to 254; it reads ADPGVCCFIT…DRSKSRDRFL (253 aa). Residues 69–76 carry the Nuclear localization signal motif; it reads RARVCRRK. 4 consecutive C3H1-type zinc fingers follow at residues 73–86, 88–110, 150–172, and 169–193; these read CRRKYCQRPCDSLH, CKLNLLGRCHYAQSQRNLCKYSH, CKSYKGEGRKQTCGQPQPCERLH, and ERLHICEHFTRGNCSYLNCLRSHNL. Residues 221–249 form a disordered region; it reads NKHARRNPPGTRAAHPHRRGGAHRDRSKS. The interval 224–254 is binding to EXOSC5; it reads ARRNPPGTRAAHPHRRGGAHRDRSKSRDRFL. Phosphoserine; by GSK3-beta is present on residues S257, S262, S266, and S270. Phosphoserine is present on S274. Residue T278 is modified to Phosphothreonine. S283 is modified (phosphoserine). Residues 284 to 291 carry the Nuclear export signal motif; the sequence is LEDVSVDV. The tract at residues 308-355 is disordered; sequence PVSSKAAGVQGPSQMRASQEFSEDGNLDDIFSRNRSDSSSSRASAAKV. Polar residues predominate over residues 318-327; the sequence is GPSQMRASQE. Phosphoserine occurs at positions 325, 351, and 398. A compositionally biased stretch (low complexity) spans 344–353; the sequence is DSSSSRASAA. The short motif at 405–406 is the Nuclear localization signal element; the sequence is KK. The segment at 457–483 is disordered; the sequence is WASASTHNAPNGSSQIMDETPNVSKSS. The segment covering 459-483 has biased composition (polar residues); it reads SASTHNAPNGSSQIMDETPNVSKSS. Y501 is modified (phosphotyrosine). Residues 512–562 form a disordered region; that stretch reads LAVPGEATTPVQSNRLPQSPLSSSSHRAAASGSPGKNSTHTSVSPAIESSR. Positions 523 to 546 are enriched in low complexity; that stretch reads QSNRLPQSPLSSSSHRAAASGSPG. S544 and S667 each carry phosphoserine. One can recognise a WWE domain in the interval 671–758; that stretch reads YEEKPLSAVF…ASKTQRHVVR (88 aa).

The protein belongs to the ARTD/PARP family. As to quaternary structure, homodimer or homooligomer. Homooligomerization is essential for its antiviral activity. Interacts with EXOSC5. Interacts with EXOSC3, EXOSC7, DCP2 and DCP1A. Interacts with PARN in an RNA-independent manner. Interacts with XRN1 in an RNA-dependent manner. Interacts (via N-terminal domain) with DHX30 (via N-terminus) in an RNA-independent manner. Interacts (via N-terminal domain) with DDX17 in an RNA-independent manner. Phosphorylation at Ser-274 is essential for sequential phosphorylation of Ser-270, Ser-266, Ser-262 and Ser-257 by GSK3-beta. Phosphorylation by GSK3-beta enhances its antiviral activity. Expressed in the kidney and liver.

The protein resides in the cytoplasm. Its subcellular location is the nucleus. Its function is as follows. Antiviral protein which inhibits the replication of viruses by recruiting the cellular RNA degradation machineries to degrade the viral mRNAs. Binds to a ZAP-responsive element (ZRE) present in the target viral mRNA, recruits cellular poly(A)-specific ribonuclease PARN to remove the poly(A) tail, and the 3'-5' exoribonuclease complex exosome to degrade the RNA body from the 3'-end. It also recruits the decapping complex DCP1-DCP2 through RNA helicase p72 (DDX17) to remove the cap structure of the viral mRNA to initiate its degradation from the 5'-end. Its target viruses belong to families which include retroviridae: human immunodeficiency virus type 1 (HIV-1) and moloney and murine leukemia virus (MoMLV), filoviridae: ebola virus (EBOV) and marburg virus (MARV), togaviridae: sindbis virus (SINV) and Ross river virus (RRV). Specifically targets the multiply spliced but not unspliced or singly spliced HIV-1 mRNAs for degradation. The sequence is that of Zinc finger CCCH-type antiviral protein 1 (Zc3hav1) from Rattus norvegicus (Rat).